The sequence spans 195 residues: Putative C-P lyase subunit protein HtxG (195 aa).

Belongs to the PhnH family.

In terms of biological role, belongs to an operon involved in hypophosphite oxidation. Exact function not known. This Stutzerimonas stutzeri (Pseudomonas stutzeri) protein is Putative C-P lyase subunit protein HtxG (htxG).